A 261-amino-acid polypeptide reads, in one-letter code: ATP synthase subunit a (261 aa).

Helical transmembrane passes span 28-48, 89-109, 140-160, 203-223, and 229-249; these read AVHL…LTIF, IAPL…MDWV, NITF…SIKV, LFGN…IGVF, and FLWA…FMML.

This sequence belongs to the ATPase A chain family. F-type ATPases have 2 components, CF(1) - the catalytic core - and CF(0) - the membrane proton channel. CF(1) has five subunits: alpha(3), beta(3), gamma(1), delta(1), epsilon(1). CF(0) has three main subunits: a(1), b(2) and c(9-12). The alpha and beta chains form an alternating ring which encloses part of the gamma chain. CF(1) is attached to CF(0) by a central stalk formed by the gamma and epsilon chains, while a peripheral stalk is formed by the delta and b chains.

It localises to the cell inner membrane. Its function is as follows. Key component of the proton channel; it plays a direct role in the translocation of protons across the membrane. The chain is ATP synthase subunit a from Colwellia psychrerythraea (strain 34H / ATCC BAA-681) (Vibrio psychroerythus).